The sequence spans 267 residues: Putative F-box protein At1g61060 (267 aa).

The F-box domain maps to Asp-15–Ile-63.

The protein is Putative F-box protein At1g61060 of Arabidopsis thaliana (Mouse-ear cress).